Reading from the N-terminus, the 1157-residue chain is Nitric oxide synthase, inducible (1157 aa).

Residues 23–27 carry the DINNN-motif; mediates interaction with SPSB1, SPSB2 and SPSB4 motif; that stretch reads DINNN. Residues 29 to 64 are disordered; the sequence is EKLRQASSSPVTQDDPKCPSRSRHRNECSQPLAETA. 2 residues coordinate Zn(2+): Cys110 and Cys115. Cys200 is a heme b binding site. Gln263, Trp372, Tyr373, and Glu377 together coordinate L-arginine. (6R)-L-erythro-5,6,7,8-tetrahydrobiopterin-binding residues include Arg381, Ile462, Trp463, and Phe476. Tyr491 contacts heme b. The calmodulin-binding stretch occupies residues 515-535; sequence FKVLVKAVLFAAVLMHKTMAA. Residues 539-677 form the Flavodoxin-like domain; it reads ATILFATETG…AFRGWAVQTF (139 aa). FMN is bound by residues Thr545, Glu546, Thr547, Arg549, Ser550, Ser591, Thr592, Ser628, Cys635, Glu661, and Gln665. An FAD-binding FR-type domain is found at 730 to 970; that stretch reads KYVFSMRLKS…VRSASGFQLP (241 aa). Arg750 contributes to the NADP(+) binding site. His772, Arg906, Tyr908, Ser909, Thr924, and Ala926 together coordinate FAD. Position 929 (Thr929) interacts with NADP(+). 4 residues coordinate FAD: Tyr930, Val943, Cys944, and Ser945. Residues Thr984, Arg1017, Ser1046, Arg1047, Lys1053, Tyr1055, Gln1057, and Asp1090 each coordinate NADP(+). The segment at 1138-1157 is disordered; that stretch reads KEGAVGPPSDPRAPGAHGKS.

It belongs to the NOS family. In terms of assembly, homodimer. Interacts with NHERF1. Interacts with GAPDH; induced by oxidatively-modified low-densitity lipoprotein (LDL(ox)). Interacts with S100A8 and S100A9 to form the iNOS-S100A8/9 transnitrosylase complex. Interacts with SPSB1, SPSB2 and SPSB4. Interacts with ELOC and CUL5 in the presence of SPSB1 or SPSB2 or SPSB4. Forms a complex with ASL, ASS1 and HSP90AA1; the complex regulates cell-autonomous L-arginine synthesis and citrulline recycling while channeling extracellular L-arginine to nitric oxide synthesis pathway. It depends on heme b as a cofactor. The cofactor is FAD. FMN serves as cofactor. Requires (6R)-L-erythro-5,6,7,8-tetrahydrobiopterin as cofactor. In terms of processing, polyubiquitinated; mediated by SPSB1, SPSB2 and SPSB4, leading to proteasomal degradation. In terms of tissue distribution, detected in both stimulated and unstimulated immune cells and macrophages with little or no up-regulation following cellular stimulation with lipopolysaccharides (LPS) or concanavalin A (ConA).

It localises to the cytoplasm. It is found in the cytosol. The enzyme catalyses 2 L-arginine + 3 NADPH + 4 O2 + H(+) = 2 L-citrulline + 2 nitric oxide + 3 NADP(+) + 4 H2O. Its activity is regulated as follows. Not stimulated by calcium/calmodulin. Its function is as follows. Produces nitric oxide (NO) which is a messenger molecule with diverse functions throughout the body. In macrophages, NO mediates tumoricidal and bactericidal actions. Also has nitrosylase activity and mediates cysteine S-nitrosylation of cytoplasmic target proteins such PTGS2/COX2. As component of the iNOS-S100A8/9 transnitrosylase complex involved in the selective inflammatory stimulus-dependent S-nitrosylation of GAPDH implicated in regulation of the GAIT complex activity and probably multiple targets including ANXA5, EZR, MSN and VIM. Involved in inflammation, enhances the synthesis of pro-inflammatory mediators such as IL6 and IL8. The polypeptide is Nitric oxide synthase, inducible (NOS2) (Sus scrofa (Pig)).